The following is a 467-amino-acid chain: tRNA modification GTPase MnmE (467 aa).

Arg25, Glu87, and Lys130 together coordinate (6S)-5-formyl-5,6,7,8-tetrahydrofolate. Positions 226 to 389 (GLSVVLAGQP…LRGELLRIAG (164 aa)) constitute a TrmE-type G domain. Asn236 contributes to the K(+) binding site. Residues 236-241 (NVGKSS), 255-261 (TPIAGTT), and 280-283 (DTAG) contribute to the GTP site. Ser240 provides a ligand contact to Mg(2+). Positions 255, 257, and 260 each coordinate K(+). Thr261 contacts Mg(2+). Lys467 is a (6S)-5-formyl-5,6,7,8-tetrahydrofolate binding site.

This sequence belongs to the TRAFAC class TrmE-Era-EngA-EngB-Septin-like GTPase superfamily. TrmE GTPase family. Homodimer. Heterotetramer of two MnmE and two MnmG subunits. The cofactor is K(+).

It is found in the cytoplasm. Its function is as follows. Exhibits a very high intrinsic GTPase hydrolysis rate. Involved in the addition of a carboxymethylaminomethyl (cmnm) group at the wobble position (U34) of certain tRNAs, forming tRNA-cmnm(5)s(2)U34. The chain is tRNA modification GTPase MnmE from Burkholderia thailandensis (strain ATCC 700388 / DSM 13276 / CCUG 48851 / CIP 106301 / E264).